The following is a 402-amino-acid chain: Triose phosphate/phosphate translocator, chloroplastic (402 aa).

A chloroplast-targeting transit peptide spans 1–72 (MESRVLSRAT…KGASLLRPCP (72 aa)). The Chloroplast intermembrane segment spans residues 73–96 (ATAGGNDSAGEEKVAPVGFFSRYP). Residues 97–117 (ALTTGFFFFTWYFLNVIFNIL) form a helical membrane-spanning segment. The Lumenal portion of the chain corresponds to 118-129 (NKKIYNYFPYPY). Residues 130-150 (FVSVIHLAVGVVYCLVSWTVG) traverse the membrane as a helical segment. The Chloroplast intermembrane segment spans residues 151–207 (LPKRAPIDGNLLKLLIPVAVCHALGHVTSNVSFAAVAVSFTHTVKALEPFFNAAASQ). Residues 208–228 (FILGQSIPITLWLSLAPVVIG) traverse the membrane as a helical segment. The Lumenal segment spans residues 229–272 (VSMASLTELSFNWLGFISAMISNISFTYRSIYSKKAMTDMDSTN). The helical transmembrane segment at 273 to 292 (IYAYISIIALIVCIPPALII) threads the bilayer. Residues 293 to 370 (EGPTLLKTGF…IIFGNKISTQ (78 aa)) lie on the Chloroplast intermembrane side of the membrane. The chain crosses the membrane as a helical span at residues 371–391 (TGIGTGIAIAGVALYSFIKAQ). Over 392–402 (IEEEKRQAKAA) the chain is Lumenal.

Belongs to the TPT transporter family. TPT (TC 2.A.7.9) subfamily. Homodimer.

The protein localises to the plastid. It localises to the chloroplast membrane. Mediates the export of fixed carbons from the chloroplasts into the cytosol in the form of triose phosphates. In Pisum sativum (Garden pea), this protein is Triose phosphate/phosphate translocator, chloroplastic.